Here is a 356-residue protein sequence, read N- to C-terminus: Histidinol-phosphate aminotransferase (356 aa).

Position 214 is an N6-(pyridoxal phosphate)lysine (K214).

It belongs to the class-II pyridoxal-phosphate-dependent aminotransferase family. Histidinol-phosphate aminotransferase subfamily. As to quaternary structure, homodimer. Pyridoxal 5'-phosphate is required as a cofactor.

It carries out the reaction L-histidinol phosphate + 2-oxoglutarate = 3-(imidazol-4-yl)-2-oxopropyl phosphate + L-glutamate. The protein operates within amino-acid biosynthesis; L-histidine biosynthesis; L-histidine from 5-phospho-alpha-D-ribose 1-diphosphate: step 7/9. In Escherichia coli O7:K1 (strain IAI39 / ExPEC), this protein is Histidinol-phosphate aminotransferase.